We begin with the raw amino-acid sequence, 1446 residues long: DNA-directed RNA polymerase subunit beta'' (1446 aa).

Zn(2+) contacts are provided by C217, C285, C292, and C295.

The protein belongs to the RNA polymerase beta' chain family. RpoC2 subfamily. In terms of assembly, in plastids the minimal PEP RNA polymerase catalytic core is composed of four subunits: alpha, beta, beta', and beta''. When a (nuclear-encoded) sigma factor is associated with the core the holoenzyme is formed, which can initiate transcription. It depends on Zn(2+) as a cofactor.

The protein resides in the plastid. Its subcellular location is the chloroplast. The catalysed reaction is RNA(n) + a ribonucleoside 5'-triphosphate = RNA(n+1) + diphosphate. Functionally, DNA-dependent RNA polymerase catalyzes the transcription of DNA into RNA using the four ribonucleoside triphosphates as substrates. This chain is DNA-directed RNA polymerase subunit beta'', found in Thalassiosira pseudonana (Marine diatom).